A 245-amino-acid chain; its full sequence is Uridylate kinase (245 aa).

12–15 (KLSG) serves as a coordination point for ATP. The segment at 20-25 (GEKGVG) is involved in allosteric activation by GTP. Residue G54 participates in UMP binding. 2 residues coordinate ATP: G55 and R59. UMP is bound by residues D74 and 135–142 (IGSPYFST). Positions 163, 169, and 172 each coordinate ATP.

It belongs to the UMP kinase family. In terms of assembly, homohexamer.

It localises to the cytoplasm. It carries out the reaction UMP + ATP = UDP + ADP. It participates in pyrimidine metabolism; CTP biosynthesis via de novo pathway; UDP from UMP (UMPK route): step 1/1. Allosterically activated by GTP. Inhibited by UTP. Catalyzes the reversible phosphorylation of UMP to UDP. This chain is Uridylate kinase, found in Streptococcus thermophilus (strain ATCC BAA-250 / LMG 18311).